The sequence spans 564 residues: Dihydroxy-acid dehydratase (564 aa).

Cys-51 provides a ligand contact to [2Fe-2S] cluster. A Mg(2+)-binding site is contributed by Asp-83. Residue Cys-124 participates in [2Fe-2S] cluster binding. The Mg(2+) site is built by Asp-125 and Lys-126. Lys-126 carries the post-translational modification N6-carboxylysine. Cys-196 is a binding site for [2Fe-2S] cluster. Glu-448 is a Mg(2+) binding site. Residue Ser-474 is the Proton acceptor of the active site.

It belongs to the IlvD/Edd family. Homodimer. Requires [2Fe-2S] cluster as cofactor. The cofactor is Mg(2+).

The catalysed reaction is (2R)-2,3-dihydroxy-3-methylbutanoate = 3-methyl-2-oxobutanoate + H2O. It catalyses the reaction (2R,3R)-2,3-dihydroxy-3-methylpentanoate = (S)-3-methyl-2-oxopentanoate + H2O. Its pathway is amino-acid biosynthesis; L-isoleucine biosynthesis; L-isoleucine from 2-oxobutanoate: step 3/4. It participates in amino-acid biosynthesis; L-valine biosynthesis; L-valine from pyruvate: step 3/4. Functions in the biosynthesis of branched-chain amino acids. Catalyzes the dehydration of (2R,3R)-2,3-dihydroxy-3-methylpentanoate (2,3-dihydroxy-3-methylvalerate) into 2-oxo-3-methylpentanoate (2-oxo-3-methylvalerate) and of (2R)-2,3-dihydroxy-3-methylbutanoate (2,3-dihydroxyisovalerate) into 2-oxo-3-methylbutanoate (2-oxoisovalerate), the penultimate precursor to L-isoleucine and L-valine, respectively. The chain is Dihydroxy-acid dehydratase from Pyrobaculum calidifontis (strain DSM 21063 / JCM 11548 / VA1).